We begin with the raw amino-acid sequence, 523 residues long: UDP-glucuronosyltransferase 3A2 (523 aa).

The N-terminal stretch at 1–22 (MAGQRVLLLVGFLLPGVLLSEA) is a signal peptide. Over 23–483 (AKILTISTVG…YVFQQPWHEQ (461 aa)) the chain is Extracellular. Residue N52 is glycosylated (N-linked (GlcNAc...) asparagine). Residues 484 to 504 (YLLDVFVFLLGLTLGTLWLCG) form a helical membrane-spanning segment. The Cytoplasmic portion of the chain corresponds to 505 to 523 (KLLGMAVWWLRGARKVKET).

It belongs to the UDP-glycosyltransferase family.

The protein localises to the membrane. It catalyses the reaction glucuronate acceptor + UDP-alpha-D-glucuronate = acceptor beta-D-glucuronoside + UDP + H(+). UDP-glucuronosyltransferases catalyze phase II biotransformation reactions in which lipophilic substrates are conjugated with glucuronic acid to increase water solubility and enhance excretion. They are of major importance in the conjugation and subsequent elimination of potentially toxic xenobiotics and endogenous compounds. This is UDP-glucuronosyltransferase 3A2 (UGT3A2) from Homo sapiens (Human).